Consider the following 610-residue polypeptide: Granule-bound starch synthase 1, chloroplastic/amyloplastic (610 aa).

The transit peptide at 1 to 79 (MATVTASSNF…SKVKTAGKIV (79 aa)) directs the protein to the chloroplast. K98 provides a ligand contact to ADP-alpha-D-glucose. Positions 438-454 (TGKKKMEAQILELEEKF) form a coiled coil.

The protein belongs to the glycosyltransferase 1 family. Bacterial/plant glycogen synthase subfamily. As to quaternary structure, interacts with PTST. This interaction is critical for the localization to starch granules. As to expression, expressed in roots, inflorescences, flowers, fruits and at much higher levels in leaves.

Its subcellular location is the plastid. The protein localises to the chloroplast. It carries out the reaction an NDP-alpha-D-glucose + [(1-&gt;4)-alpha-D-glucosyl](n) = [(1-&gt;4)-alpha-D-glucosyl](n+1) + a ribonucleoside 5'-diphosphate + H(+). It participates in glycan biosynthesis; starch biosynthesis. In terms of biological role, required for the synthesis of amylose. Destroyed as it is released from the starch granules during the night. The circadian expression is controlled by CCA1 and LHY transcription factors. The protein is Granule-bound starch synthase 1, chloroplastic/amyloplastic of Arabidopsis thaliana (Mouse-ear cress).